Reading from the N-terminus, the 170-residue chain is MFSKTLVVLAAVAAVTVNGLTKEECDAAFTGEVGKLTKDALPLVQPCSSDSGFSMVPPKGLPTDDQYVKMCASKNCRDLLDVIKKAGLKDCELNFGSVFPGSVPLNVYQLGQGFDAKCASIGGGSTPTTAPPTSTTPTTAPPTGTTPTTAPPAGTTPGVTPSPTTPKPAC.

An N-terminal signal peptide occupies residues 1–19 (MFSKTLVVLAAVAAVTVNG). 3 cysteine pairs are disulfide-bonded: Cys-25-Cys-91, Cys-47-Cys-76, and Cys-71-Cys-118. The tract at residues 122 to 170 (GGGSTPTTAPPTSTTPTTAPPTGTTPTTAPPAGTTPGVTPSPTTPKPAC) is disordered. Positions 126-162 (TPTTAPPTSTTPTTAPPTGTTPTTAPPAGTTPGVTPS) are enriched in low complexity.

The protein belongs to the elicitin family.

It is found in the secreted. In terms of biological role, induces local and distal defense responses (incompatible hypersensitive reaction) in plants from the solanaceae and cruciferae families. Elicits leaf necrosis and causes the accumulation of pathogenesis-related proteins. Might interact with the lipidic molecules of the plasma membrane. In Pythium oligandrum (Mycoparasitic fungus), this protein is Elicitin-like protein 1 (POD-1).